Consider the following 430-residue polypeptide: Enolase (430 aa).

A (2R)-2-phosphoglycerate-binding site is contributed by Gln-163. Glu-205 (proton donor) is an active-site residue. Mg(2+)-binding residues include Asp-242, Glu-285, and Asp-312. Positions 337, 366, 367, and 388 each coordinate (2R)-2-phosphoglycerate. Lys-337 functions as the Proton acceptor in the catalytic mechanism.

The protein belongs to the enolase family. Mg(2+) is required as a cofactor.

It is found in the cytoplasm. Its subcellular location is the secreted. It localises to the cell surface. The catalysed reaction is (2R)-2-phosphoglycerate = phosphoenolpyruvate + H2O. Its pathway is carbohydrate degradation; glycolysis; pyruvate from D-glyceraldehyde 3-phosphate: step 4/5. Functionally, catalyzes the reversible conversion of 2-phosphoglycerate (2-PG) into phosphoenolpyruvate (PEP). It is essential for the degradation of carbohydrates via glycolysis. This Maridesulfovibrio salexigens (strain ATCC 14822 / DSM 2638 / NCIMB 8403 / VKM B-1763) (Desulfovibrio salexigens) protein is Enolase.